The following is a 642-amino-acid chain: Assimilatory sulfite reductase (ferredoxin), chloroplastic (642 aa).

The N-terminal 61 residues, 1–61 (MSSTFRAPAG…SSSSSSPIQA (61 aa)), are a transit peptide targeting the chloroplast. Positions 46–74 (PVPPSASSSSSSPIQAVSTPAKPETATKR) are disordered. The [4Fe-4S] cluster site is built by Cys503, Cys509, Cys549, and Cys553. Position 553 (Cys553) interacts with siroheme.

Belongs to the nitrite and sulfite reductase 4Fe-4S domain family. Monomer. Interacts with ferredoxin. The cofactor is siroheme. Requires [4Fe-4S] cluster as cofactor. Phosphorylated; this phosphorylation reduces DNA-binding. In terms of tissue distribution, present in leaves and roots.

The protein localises to the plastid. It is found in the chloroplast stroma. It localises to the chloroplast nucleoid. Its subcellular location is the plastid stroma. The catalysed reaction is hydrogen sulfide + 6 oxidized [2Fe-2S]-[ferredoxin] + 3 H2O = sulfite + 6 reduced [2Fe-2S]-[ferredoxin] + 7 H(+). Essential protein with sulfite reductase activity required in assimilatory sulfate reduction pathway during both primary and secondary metabolism and thus involved in development and growth. Functionally, DNA-binding protein that binds to both double-stranded and single-stranded DNA without significant sequence specificity to reversibly repress the transcriptional activity of chloroplast nucleoids by promoting DNA compaction and possibly regulate DNA replication. The chain is Assimilatory sulfite reductase (ferredoxin), chloroplastic (SIR) from Arabidopsis thaliana (Mouse-ear cress).